Here is a 293-residue protein sequence, read N- to C-terminus: Inner membrane ABC transporter permease protein YcjO (293 aa).

At 1–12 (MNRLFSGRSDMP) the chain is on the periplasmic side. The chain crosses the membrane as a helical span at residues 13-33 (FALLLLAPSLLLLGGLVAWPM). At 34–77 (VSNIEISFLRLPLNPNIESTFVGVSNYVRILSDPGFWHSLWMTV) the chain is on the cytoplasmic side. One can recognise an ABC transmembrane type-1 domain in the interval 73-283 (LWMTVWYTAL…IIIFAVILLT (211 aa)). The helical transmembrane segment at 78–98 (WYTALVVAGSTVLGLAVAMFF) threads the bilayer. The Periplasmic segment spans residues 99 to 110 (NREFRLRKTARS). The chain crosses the membrane as a helical span at residues 111–131 (LVILSYVTPSISLVFAWKYMF). Topologically, residues 132–135 (NNGY) are cytoplasmic. The chain crosses the membrane as a helical span at residues 136 to 156 (GIVNYLGVDLLHLYEQAPLWF). Over 157–162 (DNPGSS) the chain is Periplasmic. Residues 163-183 (FVLVVLFAIWRYFPYAFISFL) form a helical membrane-spanning segment. Residues 184-214 (AILQTIDKSLYEAAEMDGANAWQRFRIVTLP) are Cytoplasmic-facing. Residues 215–235 (AIMPVLATVVTLRTIWMFYMF) form a helical membrane-spanning segment. The Periplasmic portion of the chain corresponds to 236–261 (ADVYLLTTKVDILGVYLYKTAFAFND). Residues 262–282 (LGKAAAISVVLFIIIFAVILL) form a helical membrane-spanning segment. The Cytoplasmic portion of the chain corresponds to 283 to 293 (TRKRVNLNGNK).

This sequence belongs to the binding-protein-dependent transport system permease family. MalFG subfamily.

It is found in the cell inner membrane. Functionally, probably part of the binding-protein-dependent transport system YcjNOP. Probably responsible for the translocation of the substrate across the membrane. The sequence is that of Inner membrane ABC transporter permease protein YcjO (ycjO) from Escherichia coli (strain K12).